The primary structure comprises 978 residues: Mineralocorticoid receptor (978 aa).

Residues M1 to I602 are modulating. The segment covering S234–N243 has biased composition (polar residues). 2 disordered regions span residues S234–G331 and G353–V372. Phosphoserine is present on residues S250, S259, S283, S287, and S299. Residues S259–P300 show a composition bias toward low complexity. Residues A301–G331 are compositionally biased toward polar residues. Residues C603, C606, C620, C623, C637, C643, C653, and C656 each contribute to the Zn(2+) site. 2 NR C4-type zinc fingers span residues C603 to C623 and C637 to C661. Residues C603 to M666 constitute a DNA-binding region (nuclear receptor). The interval N667–P719 is hinge. The disordered stretch occupies residues G681–A706. Residues Q688–S697 are compositionally biased toward pro residues. In terms of domain architecture, NR LBD spans Q720 to I958. N764 and Q770 together coordinate 21-hydroxyprogesterone. Aldosterone is bound by residues N764 and Q770. Residues N764 and Q770 each coordinate progesterone. The tract at residues K776 to K779 is important for coactivator binding. 21-hydroxyprogesterone is bound by residues R811 and T939. Positions 811 and 939 each coordinate aldosterone. Progesterone contacts are provided by R811 and T939.

It belongs to the nuclear hormone receptor family. NR3 subfamily. In terms of assembly, heteromultimeric cytoplasmic complex with HSP90, HSP70, and FKBP4, in the absence of ligand. After ligand binding, it translocates to the nucleus and binds to DNA as a homodimer and as a heterodimer with NR3C1. Binds the coactivator NCOA2. May interact with HSD11B2 in the absence of ligand. Binds the coactivators NCOA1, TIF1 and NRIP1. Post-translationally, phosphorylated. Expressed in heart and kidney.

The protein localises to the cytoplasm. It localises to the nucleus. The protein resides in the endoplasmic reticulum membrane. In terms of biological role, receptor for both mineralocorticoids (MC) such as aldosterone and glucocorticoids (GC) such as corticosterone or cortisol. Binds to mineralocorticoid response elements (MRE) and transactivates target genes. The effect of MC is to increase ion and water transport and thus raise extracellular fluid volume and blood pressure and lower potassium levels. The protein is Mineralocorticoid receptor (Nr3c2) of Mus musculus (Mouse).